The primary structure comprises 324 residues: Glyoxylate/hydroxypyruvate reductase B (324 aa).

Active-site residues include Arg-237 and Glu-266. The active-site Proton donor is His-285.

This sequence belongs to the D-isomer specific 2-hydroxyacid dehydrogenase family. GhrB subfamily. In terms of assembly, homodimer.

The protein resides in the cytoplasm. It catalyses the reaction glycolate + NADP(+) = glyoxylate + NADPH + H(+). The enzyme catalyses (R)-glycerate + NAD(+) = 3-hydroxypyruvate + NADH + H(+). It carries out the reaction (R)-glycerate + NADP(+) = 3-hydroxypyruvate + NADPH + H(+). Its function is as follows. Catalyzes the NADPH-dependent reduction of glyoxylate and hydroxypyruvate into glycolate and glycerate, respectively. This is Glyoxylate/hydroxypyruvate reductase B from Escherichia coli O6:H1 (strain CFT073 / ATCC 700928 / UPEC).